A 261-amino-acid polypeptide reads, in one-letter code: Thiamine thiazole synthase (261 aa).

NAD(+) is bound by residues A33, 52 to 53 (ER), G60, V124, and 152 to 154 (HVD). Residues D154 and H169 each contribute to the Fe cation site. Residue I219 participates in NAD(+) binding. Position 229 (R229) interacts with glycine.

This sequence belongs to the THI4 family. Homooctamer; tetramer of dimers. Requires Fe(2+) as cofactor.

It carries out the reaction hydrogen sulfide + glycine + NAD(+) = ADP-5-ethyl-4-methylthiazole-2-carboxylate + nicotinamide + 3 H2O + H(+). It participates in cofactor biosynthesis; thiamine diphosphate biosynthesis. In terms of biological role, involved in the biosynthesis of the thiazole moiety of thiamine. Catalyzes the conversion of NAD and glycine to adenosine diphosphate 5-(2-hydroxyethyl)-4-methylthiazole-2-carboxylate (ADT), an adenylated thiazole intermediate, using free sulfide as a source of sulfur. In Pyrobaculum aerophilum (strain ATCC 51768 / DSM 7523 / JCM 9630 / CIP 104966 / NBRC 100827 / IM2), this protein is Thiamine thiazole synthase.